Consider the following 1403-residue polypeptide: Perilipin-4 (1403 aa).

The tract at residues methionine 1 to serine 21 is disordered. A phosphoserine mark is found at serine 25 and serine 31. Positions arginine 33–methionine 70 are disordered. Repeat copies occupy residues glycine 104–glycine 136, glycine 137–threonine 169, glycine 170–threonine 202, glycine 203–threonine 235, glycine 236–threonine 268, glycine 269–alanine 301, glycine 302–threonine 334, glycine 335–threonine 367, glycine 368–alanine 400, glycine 401–threonine 433, glycine 434–threonine 466, glycine 467–threonine 499, glycine 500–threonine 532, glycine 533–alanine 565, glycine 566–threonine 598, glycine 599–threonine 631, glycine 632–threonine 664, glycine 665–alanine 697, glycine 698–threonine 730, glycine 731–threonine 763, glycine 764–alanine 796, glycine 797–threonine 829, glycine 830–threonine 862, glycine 863–alanine 895, glycine 896–threonine 928, glycine 929–threonine 961, glycine 962–alanine 994, glycine 995–glycine 1027, and threonine 1028–glycine 1060. The interval glycine 104–glycine 1060 is 29 X 33 AA approximate tandem repeat. Serine 1281 carries the phosphoserine modification. Residue threonine 1287 is modified to Phosphothreonine.

It belongs to the perilipin family. As to expression, specifically expressed in white adipose tissue and also weakly detected in heart and skeletal muscle (at protein level).

The protein resides in the cell membrane. The protein localises to the cytoplasm. It localises to the lipid droplet. Its function is as follows. May play a role in triacylglycerol packaging into adipocytes. May function as a coat protein involved in the biogenesis of lipid droplets. The polypeptide is Perilipin-4 (Plin4) (Mus musculus (Mouse)).